The primary structure comprises 256 residues: Leucyl/phenylalanyl-tRNA--protein transferase (256 aa).

The segment at 1 to 21 (MIPWLPDDSDSAPFPPTRLAL) is disordered.

The protein belongs to the L/F-transferase family.

It is found in the cytoplasm. The catalysed reaction is N-terminal L-lysyl-[protein] + L-leucyl-tRNA(Leu) = N-terminal L-leucyl-L-lysyl-[protein] + tRNA(Leu) + H(+). It catalyses the reaction N-terminal L-arginyl-[protein] + L-leucyl-tRNA(Leu) = N-terminal L-leucyl-L-arginyl-[protein] + tRNA(Leu) + H(+). It carries out the reaction L-phenylalanyl-tRNA(Phe) + an N-terminal L-alpha-aminoacyl-[protein] = an N-terminal L-phenylalanyl-L-alpha-aminoacyl-[protein] + tRNA(Phe). Functionally, functions in the N-end rule pathway of protein degradation where it conjugates Leu, Phe and, less efficiently, Met from aminoacyl-tRNAs to the N-termini of proteins containing an N-terminal arginine or lysine. This Leptothrix cholodnii (strain ATCC 51168 / LMG 8142 / SP-6) (Leptothrix discophora (strain SP-6)) protein is Leucyl/phenylalanyl-tRNA--protein transferase.